The sequence spans 82 residues: Penaeidin-3b (82 aa).

Positions 1–19 (MRLVVCLVFLASFALVCQG) are cleaved as a signal peptide. At Gln20 the chain carries Pyrrolidone carboxylic acid. Disulfide bonds link Cys51–Cys66, Cys55–Cys73, and Cys67–Cys74. Position 81 is a serine amide (Ser81).

The protein belongs to the penaeidin family. As to expression, higher expression in hemocytes and to a lesser extent in heart, testis, gills, intestine, lymphoid organ and hepatopancreas. Traces in eyes and subcuticular epithelium. Not present in the brain.

The protein localises to the cytoplasmic granule. In terms of biological role, antibacterial activity against M.luteus and E.coli bacteria. Antifungal activity against N.crassa and F.oxysporum. Presents chitin-binding activity. The sequence is that of Penaeidin-3b from Penaeus vannamei (Whiteleg shrimp).